Reading from the N-terminus, the 549-residue chain is Cation/acetate symporter ActP (549 aa).

Residues 1-32 (MKRVLTALAATLPFAANAADAISGAVERQPTN) lie on the Periplasmic side of the membrane. A helical membrane pass occupies residues 33–55 (WQAIIMFLIFVVFTLGITYWASK). At 56–75 (RVRSRNDYYTAGGNITGFQN) the chain is on the cytoplasmic side. The chain crosses the membrane as a helical span at residues 76-98 (GLAIAGDYMSAASFLGISALVFT). The Periplasmic segment spans residues 99 to 102 (SGYD). The helical transmembrane segment at 103–125 (GLIYSLGFLVGWPIILFLIAERL) threads the bilayer. Over 126–145 (RNLGRYTFADVASYRLKQGP) the chain is Cytoplasmic. A helical membrane pass occupies residues 146–168 (IRILSACGSLVVVALYLIAQMVG). The Periplasmic segment spans residues 169–182 (AGKLIELLFGLNYH). The chain crosses the membrane as a helical span at residues 183 to 205 (IAVVLVGVLMMMYVLFGGMLATT). The Cytoplasmic portion of the chain corresponds to 206–211 (WVQIIK). A helical membrane pass occupies residues 212–234 (AVLLLFGASFMAFMVMKHVGFSF). The Periplasmic portion of the chain corresponds to 235–263 (NNLFSEAMAVHPKGVDIMKPGGLVKDPIS). The helical transmembrane segment at 264–286 (ALSLGLGLMFGTAGLPHILMHFF) threads the bilayer. Residues 287-297 (TVSDAREARKS) lie on the Cytoplasmic side of the membrane. Residues 298-320 (VFYATGFMGYFYILTFIIGFGAI) form a helical membrane-spanning segment. At 321-358 (MLVGANPEYKDAAGHLIGGNNMAAVHLANAVGGNLFLG) the chain is on the periplasmic side. The helical transmembrane segment at 359–381 (FISAVAFATILAVVAGLTLAGAS) threads the bilayer. At 382–401 (AVSHDLYANVFKKGATEREE) the chain is on the cytoplasmic side. Residues 402-424 (LRVSKITVLILGVIAIILGVLFE) form a helical membrane-spanning segment. Topologically, residues 425–427 (NQN) are periplasmic. The chain crosses the membrane as a helical span at residues 428–450 (IAFMVGLAFAIAASCNFPIILLS). The Cytoplasmic segment spans residues 451 to 461 (MYWSKLTTRGA). The helical transmembrane segment at 462–484 (MLGGWLGLITAVVLMILGPTIWV) threads the bilayer. At 485–493 (QILGHEKAI) the chain is on the periplasmic side. Residues 494-516 (FPYEYPALFSISVAFLGIWLFSA) form a helical membrane-spanning segment. The Cytoplasmic segment spans residues 517–549 (TDNSAEGARERELFRAQFIRSQTGFGVEQGRAH).

It belongs to the sodium:solute symporter (SSF) (TC 2.A.21) family.

Its subcellular location is the cell inner membrane. Transports acetate. The sequence is that of Cation/acetate symporter ActP (actP) from Escherichia coli O6:H1 (strain CFT073 / ATCC 700928 / UPEC).